The chain runs to 462 residues: MQYFPIFVDTKELNCLVVGAGEVAARKVELLLKTSATITVVAPWACDTVQRLADEGQVTLHTRGYESSDLTAKQLVFVATDDSQLNIDIHHQAKAQNILVNVVDNTPLCQFITPSIVDRSPIIIAMSSGGVAPVLLRYLRQKLESVIPQKVSLLGQFSEKFRETVKARFNSVTKRRYFWEDILDGDVAEQVLQGNNSKAEQMMQDKLALDEHDSGKGEVYLVGAGPGDPDLLTFRALRLMQKADVVVYDRLVSKEILELVRRDAEKIYVGKARSLHTVPQDEINALLADLALKGNRVVRLKGGDPFIFGRGGEEIETLVEKGVSFQVVPGITAASGAASYAGIPLTHRDHAKSVVFATGHLRDNSINLNWPMLAQPEQTTVFYMGLTGLPVICEKLIQHGLPDTTEIALVQSATTTEQKVVAGNLANIQQKVAEAGIKPPALIIVGSVVSLREKLNWFGADA.

The interval 1 to 203 (MQYFPIFVDT…GNNSKAEQMM (203 aa)) is precorrin-2 dehydrogenase /sirohydrochlorin ferrochelatase. NAD(+)-binding positions include 22–23 (EV) and 43–44 (PW). Phosphoserine is present on Ser128. The interval 217-462 (GEVYLVGAGP…EKLNWFGADA (246 aa)) is uroporphyrinogen-III C-methyltransferase. Residue Pro226 participates in S-adenosyl-L-methionine binding. The active-site Proton acceptor is Asp249. Lys271 serves as the catalytic Proton donor. S-adenosyl-L-methionine is bound by residues 302–304 (GGD), Ile307, 332–333 (TA), Met384, and Ala413.

The protein in the N-terminal section; belongs to the precorrin-2 dehydrogenase / sirohydrochlorin ferrochelatase family. In the C-terminal section; belongs to the precorrin methyltransferase family.

The enzyme catalyses uroporphyrinogen III + 2 S-adenosyl-L-methionine = precorrin-2 + 2 S-adenosyl-L-homocysteine + H(+). It catalyses the reaction precorrin-2 + NAD(+) = sirohydrochlorin + NADH + 2 H(+). The catalysed reaction is siroheme + 2 H(+) = sirohydrochlorin + Fe(2+). It functions in the pathway cofactor biosynthesis; adenosylcobalamin biosynthesis; precorrin-2 from uroporphyrinogen III: step 1/1. The protein operates within cofactor biosynthesis; adenosylcobalamin biosynthesis; sirohydrochlorin from precorrin-2: step 1/1. Its pathway is porphyrin-containing compound metabolism; siroheme biosynthesis; precorrin-2 from uroporphyrinogen III: step 1/1. It participates in porphyrin-containing compound metabolism; siroheme biosynthesis; siroheme from sirohydrochlorin: step 1/1. It functions in the pathway porphyrin-containing compound metabolism; siroheme biosynthesis; sirohydrochlorin from precorrin-2: step 1/1. Functionally, multifunctional enzyme that catalyzes the SAM-dependent methylations of uroporphyrinogen III at position C-2 and C-7 to form precorrin-2 via precorrin-1. Then it catalyzes the NAD-dependent ring dehydrogenation of precorrin-2 to yield sirohydrochlorin. Finally, it catalyzes the ferrochelation of sirohydrochlorin to yield siroheme. This Pseudoalteromonas atlantica (strain T6c / ATCC BAA-1087) protein is Siroheme synthase.